The following is a 482-amino-acid chain: MKLNDSNLFRQQALINGEWLDANNGEAIDVTNPANGDKLGSVPKMGADETRAAIDAANRALPAWRALTAKERATILRNWFNLMMEHQDDLARLMTLEQGKPLAEAKGEISYAASFIEWFAEEGKRIYGDTIPGHQADKRLIVIKQPIGVTAAITPWNFPAAMITRKAGPALAAGCTMVLKPASQTPFSALALAELAIRAGVPAGVFNVVTGSAGAVGNELTSNPLVRKLSFTGSTEIGRQLMEQCAKDIKKVSLELGGNAPFIVFDDADLDKAVEGALASKFRNAGQTCVCANRLYVQDGVYDRFAEKLQQAVSKLHIGDGLDNGVTIGPLIDEKAVAKVEEHIADALEKGARVVCGGKAHERGGNFFQPTILVDVPANAKVSKEETFGPLAPLFRFKDEADVIAQANDTEFGLAAYFYARDLSRVFRVGEALEYGIVGINTGIISNEVAPFGGIKASGLGREGSKYGIEDYLEIKYMCIGL.

NADP(+)-binding positions include 156–157, 180–183, and 233–234; these read WN, KPAS, and GS. E255 acts as the Proton acceptor in catalysis. L256 serves as a coordination point for NADP(+). The Nucleophile role is filled by C289. E386 is a binding site for NADP(+).

Belongs to the aldehyde dehydrogenase family. As to quaternary structure, homotetramer.

It catalyses the reaction succinate semialdehyde + NADP(+) + H2O = succinate + NADPH + 2 H(+). The enzyme catalyses 5-oxopentanoate + NADP(+) + H2O = glutarate + NADPH + 2 H(+). Its pathway is amino-acid degradation; 4-aminobutanoate degradation. The protein operates within amino-acid degradation. Functionally, catalyzes the NADP(+)-dependent oxidation of succinate semialdehyde to succinate. Thereby functions in a GABA degradation pathway that allows some E.coli strains to utilize GABA as a nitrogen source for growth. Also catalyzes the conversion of glutarate semialdehyde to glutarate, as part of a L-lysine degradation pathway that proceeds via cadaverine, glutarate and L-2-hydroxyglutarate. The polypeptide is Succinate-semialdehyde dehydrogenase [NADP(+)] GabD (gabD) (Escherichia coli (strain K12)).